A 173-amino-acid chain; its full sequence is NADH-ubiquinone oxidoreductase chain 6 (173 aa).

The next 5 membrane-spanning stretches (helical) occupy residues 1–21 (MTYFMFFLGLCFVLGGLAVAS), 27–47 (YGVVGLVLASVAGCGWLLSLG), 48–68 (ISFVSLVLFMVYLGGMLVVFV), 87–107 (VIGYGAGFVGVLMVGMVIGGF), and 139–159 (CGVGMFLVAGWGLLLTLFVVL).

The protein belongs to the complex I subunit 6 family.

It localises to the mitochondrion membrane. It carries out the reaction a ubiquinone + NADH + 5 H(+)(in) = a ubiquinol + NAD(+) + 4 H(+)(out). Functionally, core subunit of the mitochondrial membrane respiratory chain NADH dehydrogenase (Complex I) that is believed to belong to the minimal assembly required for catalysis. Complex I functions in the transfer of electrons from NADH to the respiratory chain. The immediate electron acceptor for the enzyme is believed to be ubiquinone. The polypeptide is NADH-ubiquinone oxidoreductase chain 6 (MT-ND6) (Alca torda (Razorbill)).